The chain runs to 1164 residues: WASH complex subunit 5 (1164 aa).

This sequence belongs to the strumpellin family. In terms of assembly, probable component of the WASH complex.

The polypeptide is WASH complex subunit 5 (Dictyostelium discoideum (Social amoeba)).